The primary structure comprises 371 residues: Meiotic drive suppressor wtf18 (371 aa).

8 helical membrane passes run 86–106 (FLLRLLISVLAVSVVFFTAWV), 120–140 (AFSVTIGITCPILFIATFCFF), 153–173 (VTVIFLAQCVKVTVIFLAQCV), 197–217 (DLVVTIWLAWVVICFILFGCV), 233–253 (CSISAALFFILLLVCIPIWTL), 257–277 (LFGLFQVLGVQSCVVIVTKGL), 287–307 (ATGYEIEASSLFVIGNFLFFY), and 321–341 (FIGNGIASFLGGLGNAFGGIG).

Belongs to the WTF family. Homomer. Interacts with other proteins that exhibit high sequence similarity.

It is found in the spore membrane. It localises to the vacuole membrane. Functionally, acts as a suppressor component of the dual wtf meiotic drive system, and can suppress but not confer meiotic drive by compatible poisons. Wtf meiotic drive systems promote unequal transmission of alleles from the parental zygote to progeny spores by encoding a poison and an antidote from the same locus; the poison is trans-acting and forms toxic aggregates in all spores within an ascus, wherease the antidote is spore-specific and targets aggregates for degradation by the vacuole. Meiotic drive by wtf systems therefore lead to poisoning of all progeny that do not inherit the dual poison/antidote allele, or express a compatible antidote. In Schizosaccharomyces kambucha (Fission yeast), this protein is Meiotic drive suppressor wtf18.